Reading from the N-terminus, the 158-residue chain is Lysozyme C (158 aa).

An N-terminal signal peptide occupies residues 1–18 (MRVLPLALLVGLLAVSDA). Residues 19 to 150 (KVLGKCEFAR…DQYMAECWSR (132 aa)) form the C-type lysozyme domain. 4 disulfides stabilise this stretch: cysteine 24–cysteine 147, cysteine 46–cysteine 135, cysteine 80–cysteine 93, and cysteine 89–cysteine 107. Residues glutamate 51 and aspartate 68 contribute to the active site.

It belongs to the glycosyl hydrolase 22 family. Monomer. Strongly expressed in gill and gonad, and marginally detectable in hemolymph and lymphoid organ. Not expressed in kidney, hepatopancreas or tail muscle.

It localises to the secreted. The enzyme catalyses Hydrolysis of (1-&gt;4)-beta-linkages between N-acetylmuramic acid and N-acetyl-D-glucosamine residues in a peptidoglycan and between N-acetyl-D-glucosamine residues in chitodextrins.. Lysozymes have primarily a bacteriolytic function; those in tissues and body fluids are associated with the monocyte-macrophage system and enhance the activity of immunoagents. Has bacteriolytic activity against Gram-positive bacterium M.luteus, and Gram-negative shrimp pathogenic bacteria V.alginolyticus, V.parahaemolyticus and V.vulnificus. May play a role in host defense. The protein is Lysozyme C of Penaeus merguiensis (Banana prawn).